The primary structure comprises 178 residues: MORN repeat-containing protein 5 (178 aa).

MORN repeat units follow at residues 8 to 30 (YDGD…THTR), 31 to 53 (YVGE…NGSK), and 54 to 75 (YEGT…DGLK).

The protein localises to the cell projection. It is found in the cilium. Its subcellular location is the flagellum. This is MORN repeat-containing protein 5 (morn5) from Danio rerio (Zebrafish).